Reading from the N-terminus, the 387-residue chain is Zinc finger protein neuro-d4 (387 aa).

Glycyl lysine isopeptide (Lys-Gly) (interchain with G-Cter in SUMO2) cross-links involve residues lysine 106, lysine 129, and lysine 133. A C2H2-type zinc finger spans residues 195-218; the sequence is YVCDICGKRYKNRPGLSYHYTHTH. 2 consecutive PHD-type zinc fingers follow at residues 271 to 328 and 325 to 375; these read NGYC…CKSC and CKSC…CLRH. Positions 274, 277, 293, 296, 301, 304, 322, 325, 328, 331, 343, 346, 351, 354, 369, and 372 each coordinate Zn(2+).

This sequence belongs to the requiem/DPF family. In terms of assembly, component of neuron-specific chromatin remodeling complex (nBAF complex) composed of at least, ARID1A/BAF250A or ARID1B/BAF250B, SMARCD1/BAF60A, SMARCD3/BAF60C, SMARCA2/BRM/BAF190B, SMARCA4/BRG1/BAF190A, SMARCB1/BAF47, SMARCC1/BAF155, SMARCE1/BAF57, SMARCC2/BAF170, DPF1/BAF45B, DPF3/BAF45C, ACTL6B/BAF53B and actin. As to expression, at embryonic stages, predominant expression in the nervous system. Expressed specifically in postmitotic neurons (at protein level).

It localises to the cytoplasm. The protein resides in the nucleus. Its function is as follows. May have an important role in developing neurons by participating in regulation of cell survival, possibly as a neurospecific transcription factor. Belongs to the neuron-specific chromatin remodeling complex (nBAF complex). During neural development a switch from a stem/progenitor to a postmitotic chromatin remodeling mechanism occurs as neurons exit the cell cycle and become committed to their adult state. The transition from proliferating neural stem/progenitor cells to postmitotic neurons requires a switch in subunit composition of the npBAF and nBAF complexes. As neural progenitors exit mitosis and differentiate into neurons, npBAF complexes which contain ACTL6A/BAF53A and PHF10/BAF45A, are exchanged for homologous alternative ACTL6B/BAF53B and DPF1/BAF45B or DPF3/BAF45C subunits in neuron-specific complexes (nBAF). The npBAF complex is essential for the self-renewal/proliferative capacity of the multipotent neural stem cells. The nBAF complex along with CREST plays a role regulating the activity of genes essential for dendrite growth. The polypeptide is Zinc finger protein neuro-d4 (Mus musculus (Mouse)).